The sequence spans 147 residues: Cytochrome c-type biogenesis protein CcmE (147 aa).

Over 1–9 (MKNLKKQRR) the chain is Cytoplasmic. Residues 10 to 30 (IQVIALATVALVLSTALIGYA) traverse the membrane as a helical; Signal-anchor for type II membrane protein segment. Residues 31-147 (MRDGINFFRA…EQGVYKGTEG (117 aa)) are Periplasmic-facing. Heme-binding residues include histidine 123 and tyrosine 127.

It belongs to the CcmE/CycJ family.

It is found in the cell inner membrane. Heme chaperone required for the biogenesis of c-type cytochromes. Transiently binds heme delivered by CcmC and transfers the heme to apo-cytochromes in a process facilitated by CcmF and CcmH. This Roseobacter denitrificans (strain ATCC 33942 / OCh 114) (Erythrobacter sp. (strain OCh 114)) protein is Cytochrome c-type biogenesis protein CcmE.